The primary structure comprises 311 residues: Phospho-N-acetylmuramoyl-pentapeptide-transferase (311 aa).

10 helical membrane-spanning segments follow: residues E2–F22, G48–F68, S74–M94, I104–I124, L144–N164, G168–G188, V192–A212, I214–L234, L237–I257, and K288–W308.

The protein belongs to the glycosyltransferase 4 family. MraY subfamily. Mg(2+) serves as cofactor.

Its subcellular location is the cell inner membrane. It carries out the reaction UDP-N-acetyl-alpha-D-muramoyl-L-alanyl-gamma-D-glutamyl-meso-2,6-diaminopimeloyl-D-alanyl-D-alanine + di-trans,octa-cis-undecaprenyl phosphate = di-trans,octa-cis-undecaprenyl diphospho-N-acetyl-alpha-D-muramoyl-L-alanyl-D-glutamyl-meso-2,6-diaminopimeloyl-D-alanyl-D-alanine + UMP. Its pathway is cell wall biogenesis; peptidoglycan biosynthesis. In terms of biological role, catalyzes the initial step of the lipid cycle reactions in the biosynthesis of the cell wall peptidoglycan: transfers peptidoglycan precursor phospho-MurNAc-pentapeptide from UDP-MurNAc-pentapeptide onto the lipid carrier undecaprenyl phosphate, yielding undecaprenyl-pyrophosphoryl-MurNAc-pentapeptide, known as lipid I. In Kosmotoga olearia (strain ATCC BAA-1733 / DSM 21960 / TBF 19.5.1), this protein is Phospho-N-acetylmuramoyl-pentapeptide-transferase.